The primary structure comprises 270 residues: 4-hydroxy-tetrahydrodipicolinate reductase (270 aa).

Residues 11-16 (GAGGRM) and Glu-37 each bind NAD(+). Arg-38 is a binding site for NADP(+). Residues 101–103 (GTT) and 125–128 (APNM) contribute to the NAD(+) site. The active-site Proton donor/acceptor is the His-158. His-159 provides a ligand contact to (S)-2,3,4,5-tetrahydrodipicolinate. Lys-162 (proton donor) is an active-site residue. (S)-2,3,4,5-tetrahydrodipicolinate is bound at residue 168–169 (GT).

Belongs to the DapB family.

The protein localises to the cytoplasm. The catalysed reaction is (S)-2,3,4,5-tetrahydrodipicolinate + NAD(+) + H2O = (2S,4S)-4-hydroxy-2,3,4,5-tetrahydrodipicolinate + NADH + H(+). It catalyses the reaction (S)-2,3,4,5-tetrahydrodipicolinate + NADP(+) + H2O = (2S,4S)-4-hydroxy-2,3,4,5-tetrahydrodipicolinate + NADPH + H(+). It participates in amino-acid biosynthesis; L-lysine biosynthesis via DAP pathway; (S)-tetrahydrodipicolinate from L-aspartate: step 4/4. In terms of biological role, catalyzes the conversion of 4-hydroxy-tetrahydrodipicolinate (HTPA) to tetrahydrodipicolinate. This Shewanella sp. (strain ANA-3) protein is 4-hydroxy-tetrahydrodipicolinate reductase.